The chain runs to 638 residues: Growth hormone receptor (638 aa).

A signal peptide spans 1-18; that stretch reads MDLWQLLLTLALAGSSDA. The Extracellular portion of the chain corresponds to 19–264; the sequence is FSGSEATAAI…SQFTCEEDFY (246 aa). An N-linked (GlcNAc...) asparagine glycan is attached at asparagine 46. Cystine bridges form between cysteine 56–cysteine 66 and cysteine 101–cysteine 112. Asparagine 115 carries an N-linked (GlcNAc...) asparagine glycan. Cysteine 126 and cysteine 140 are oxidised to a cystine. Residues 151 to 254 form the Fibronectin type-III domain; that stretch reads PPIALNWTLL…EVLYVTLPQM (104 aa). N-linked (GlcNAc...) asparagine glycans are attached at residues asparagine 156, asparagine 161, and asparagine 200. The WSXWS motif signature appears at 240 to 244; sequence YGEFS. Residues 260–262 form a required for ADAM17-mediated proteolysis region; the sequence is EED. A helical transmembrane segment spans residues 265 to 288; that stretch reads FPWLLIIIFGIFGLTVMLFVFLFS. Topologically, residues 289–638 are cytoplasmic; it reads KQQRIKMLIL…STDQLNKIMP (350 aa). The required for JAK2 binding stretch occupies residues 294 to 379; that stretch reads KMLILPPVPV…HEKSHSNLGV (86 aa). The short motif at 297–305 is the Box 1 motif element; that stretch reads ILPPVPVPK. The short motif at 340-349 is the UbE motif element; the sequence is DSWVEFIELD. Phosphoserine is present on serine 341. The tract at residues 353–391 is disordered; it reads PDEKTEESDTDRLLSSDHEKSHSNLGVKDGDSGRTSCCE. Basic and acidic residues predominate over residues 362–384; the sequence is TDRLLSSDHEKSHSNLGVKDGDS. A phosphotyrosine; by JAK2 mark is found at tyrosine 487 and tyrosine 595.

Belongs to the type I cytokine receptor family. Type 1 subfamily. In terms of assembly, on growth hormone (GH) binding, forms homodimers and binds JAK2 via a box 1-containing domain. Post-translationally, the soluble form (GHBP) is produced by phorbol ester-promoted proteolytic cleavage at the cell surface (shedding) by ADAM17/TACE. Shedding is inhibited by growth hormone (GH) binding to the receptor probably due to a conformational change in GHR rendering the receptor inaccessible to ADAM17. In terms of processing, on GH binding, phosphorylated on tyrosine residues in the cytoplasmic domain by JAK2. Ubiquitinated by the ECS(SOCS2) complex following ligand-binding and phosphorylation by JAK2, leading to its degradation by the proteasome. Regulation by the ECS(SOCS2) complex acts as a negative feedback loop of growth hormone receptor signaling. Ubiquitination is not sufficient for GHR internalization. As to expression, expressed in various tissues with high expression in liver and skeletal muscle. Isoform 2 is expressed in lung, stomach and muscle. In terms of tissue distribution, predominantly expressed in kidney, bladder, adrenal gland and brain stem. Highly expressed in placental villi.

Its subcellular location is the cell membrane. It is found in the secreted. Functionally, receptor for pituitary gland growth hormone (GH1) involved in regulating postnatal body growth. On ligand binding, couples to the JAK2/STAT5 pathway. Its function is as follows. The soluble form (GHBP) acts as a reservoir of growth hormone in plasma and may be a modulator/inhibitor of GH signaling. In terms of biological role, up-regulates the production of the soluble Growth hormone-binding protein form (GHBP) and acts as a negative inhibitor of growth hormone signaling. In Homo sapiens (Human), this protein is Growth hormone receptor (GHR).